A 242-amino-acid polypeptide reads, in one-letter code: Histone-lysine N-methyltransferase set-1 (242 aa).

The segment at 1–61 (MKVAAKKLAT…TRSRKGVSVK (61 aa)) is disordered. Low complexity predominate over residues 30-43 (SENPSSLASHSSSS). Residues 104–226 (RLLEVYKDVV…QGEELLYDYG (123 aa)) form the SET domain. S-adenosyl-L-methionine is bound by residues 114 to 116 (KGR), tyrosine 159, and 186 to 187 (NH).

The protein belongs to the class V-like SAM-binding methyltransferase superfamily. Histone-lysine methyltransferase family. PR/SET subfamily. In terms of tissue distribution, in embryos, it is expressed ubiquitously. In late embryos, it is expressed in hypodermal seam cells. In L3 and L4 larvae and thereafter, it is expressed in vulval precursor cells. In adult males, it is also expressed in 6 unidentified posterior cells.

It is found in the nucleus. Its subcellular location is the chromosome. The catalysed reaction is L-lysyl(20)-[histone H4] + S-adenosyl-L-methionine = N(6)-methyl-L-lysyl(20)-[histone H4] + S-adenosyl-L-homocysteine + H(+). In terms of biological role, histone methyltransferase that specifically monomethylates 'Lys-20' of histone H4 (H4K20me1). H4K20me1 is enriched on hermaphrodite X chromosomes and during mitosis. Involved in dosage compensation by repression of X-linked gene expression in hermaphrodites. Plays a role in growth and body fat regulation downstream of the TOR complex 2 pathway. In Caenorhabditis elegans, this protein is Histone-lysine N-methyltransferase set-1 (set-1).